We begin with the raw amino-acid sequence, 474 residues long: Vitamin D-binding protein (474 aa).

Residues 1–16 (MKRILVFLLAVAFVHA) form the signal peptide. 3 Albumin domains span residues 17–208 (LERG…QLKH), 209–393 (FSLL…QLTR), and 394–474 (ELSS…TLQS). Disulfide bonds link Cys-29–Cys-75 and Cys-74–Cys-83. Asn-86 carries N-linked (GlcNAc...) asparagine glycosylation. 12 disulfide bridges follow: Cys-96-Cys-112, Cys-111-Cys-122, Cys-145-Cys-190, Cys-189-Cys-198, Cys-220-Cys-266, Cys-265-Cys-273, Cys-285-Cys-299, Cys-298-Cys-310, Cys-334-Cys-375, Cys-374-Cys-383, Cys-406-Cys-452, and Cys-451-Cys-461. The N-linked (GlcNAc...) asparagine glycan is linked to Asn-287.

Belongs to the ALB/AFP/VDB family. Associates with membrane-bound immunoglobulin on the surface of B-lymphocytes and with IgG Fc receptor on the membranes of T-lymphocytes. Interacts with LRP2; the interaction is required for renal uptake of GC in complex with 25-hydroxyvitamin D3.

Its subcellular location is the secreted. Its function is as follows. Involved in vitamin D transport and storage, scavenging of extracellular G-actin, enhancement of the chemotactic activity of C5 alpha for neutrophils in inflammation and macrophage activation. This chain is Vitamin D-binding protein (GC), found in Bos taurus (Bovine).